The sequence spans 477 residues: Protein DETOXIFICATION 5 (477 aa).

12 helical membrane passes run 38–58 (AAPM…SVMV), 72–92 (LATA…VGAL), 113–133 (FSAI…WFYM), 146–166 (ISKV…AQAV), 187–207 (AITT…AFGL), 211–231 (GAAL…ALYV), 263–283 (AAMT…SGLL), 292–312 (VLSI…GIGA), 333–353 (AVFA…TLLF), 376–396 (LSSL…LDGV), 411–431 (VVAY…WGHM), and 436–456 (LWIG…IVTA).

It belongs to the multi antimicrobial extrusion (MATE) (TC 2.A.66.1) family.

The protein localises to the membrane. This chain is Protein DETOXIFICATION 5, found in Arabidopsis thaliana (Mouse-ear cress).